We begin with the raw amino-acid sequence, 185 residues long: Ribonuclease HII (185 aa).

One can recognise an RNase H type-2 domain in the interval Met-1–Phe-185. A divalent metal cation contacts are provided by Asp-7, Glu-8, and Asp-96.

Belongs to the RNase HII family. Mn(2+) is required as a cofactor. It depends on Mg(2+) as a cofactor.

Its subcellular location is the cytoplasm. The enzyme catalyses Endonucleolytic cleavage to 5'-phosphomonoester.. Endonuclease that specifically degrades the RNA of RNA-DNA hybrids. This chain is Ribonuclease HII, found in Campylobacter hominis (strain ATCC BAA-381 / DSM 21671 / CCUG 45161 / LMG 19568 / NCTC 13146 / CH001A).